The following is a 201-amino-acid chain: Large ribosomal subunit protein uL4 (201 aa).

The tract at residues 44–66 (KAQKTRAEVRGGGKKPWRQKGTG) is disordered. Over residues 55 to 66 (GGKKPWRQKGTG) the composition is skewed to basic residues.

It belongs to the universal ribosomal protein uL4 family. In terms of assembly, part of the 50S ribosomal subunit.

One of the primary rRNA binding proteins, this protein initially binds near the 5'-end of the 23S rRNA. It is important during the early stages of 50S assembly. It makes multiple contacts with different domains of the 23S rRNA in the assembled 50S subunit and ribosome. In terms of biological role, forms part of the polypeptide exit tunnel. The polypeptide is Large ribosomal subunit protein uL4 (Alteromonas mediterranea (strain DSM 17117 / CIP 110805 / LMG 28347 / Deep ecotype)).